Reading from the N-terminus, the 252-residue chain is 3-dehydroquinate dehydratase (252 aa).

Residues Ser21, 46–48 (EWR), and Arg82 each bind 3-dehydroquinate. Catalysis depends on His143, which acts as the Proton donor/acceptor. The active-site Schiff-base intermediate with substrate is Lys170. 3 residues coordinate 3-dehydroquinate: Arg213, Ser232, and Gln236.

Belongs to the type-I 3-dehydroquinase family. As to quaternary structure, homodimer.

It catalyses the reaction 3-dehydroquinate = 3-dehydroshikimate + H2O. It participates in metabolic intermediate biosynthesis; chorismate biosynthesis; chorismate from D-erythrose 4-phosphate and phosphoenolpyruvate: step 3/7. Its function is as follows. Involved in the third step of the chorismate pathway, which leads to the biosynthesis of aromatic amino acids. Catalyzes the cis-dehydration of 3-dehydroquinate (DHQ) and introduces the first double bond of the aromatic ring to yield 3-dehydroshikimate. The sequence is that of 3-dehydroquinate dehydratase from Escherichia coli O17:K52:H18 (strain UMN026 / ExPEC).